The sequence spans 269 residues: [LysW]-aminoadipate kinase (269 aa).

5-8 (KVGG) provides a ligand contact to ATP. R64 lines the substrate pocket. Y78 lines the ATP pocket. N168 contributes to the substrate binding site.

The protein belongs to the acetylglutamate kinase family. LysZ subfamily.

The protein localises to the cytoplasm. The catalysed reaction is [amino-group carrier protein]-C-terminal-N-(1,4-dicarboxybutan-1-yl)-L-glutamine + ATP = [amino-group carrier protein]-C-terminal-N-(1-carboxy-5-phosphooxy-5-oxopentan-1-yl)-L-glutamine + ADP. The protein operates within amino-acid biosynthesis; L-lysine biosynthesis via AAA pathway; L-lysine from L-alpha-aminoadipate (Thermus route): step 2/5. Functionally, catalyzes the phosphorylation of LysW-gamma-alpha-aminoadipate. Does not phosphorylate N-acetyl-glutamate. This is [LysW]-aminoadipate kinase from Thermus thermophilus (strain ATCC BAA-163 / DSM 7039 / HB27).